We begin with the raw amino-acid sequence, 404 residues long: Cysteine desulfurase IscS (404 aa).

Residues 75-76 (AT), Asn155, Gln183, and 203-205 (SAH) each bind pyridoxal 5'-phosphate. Lys206 carries the N6-(pyridoxal phosphate)lysine modification. Thr243 contributes to the pyridoxal 5'-phosphate binding site. The active-site Cysteine persulfide intermediate is the Cys328. Cys328 contacts [2Fe-2S] cluster.

Belongs to the class-V pyridoxal-phosphate-dependent aminotransferase family. NifS/IscS subfamily. Homodimer. Forms a heterotetramer with IscU, interacts with other sulfur acceptors. The cofactor is pyridoxal 5'-phosphate.

It localises to the cytoplasm. It carries out the reaction (sulfur carrier)-H + L-cysteine = (sulfur carrier)-SH + L-alanine. Its pathway is cofactor biosynthesis; iron-sulfur cluster biosynthesis. Master enzyme that delivers sulfur to a number of partners involved in Fe-S cluster assembly, tRNA modification or cofactor biosynthesis. Catalyzes the removal of elemental sulfur atoms from cysteine to produce alanine. Functions as a sulfur delivery protein for Fe-S cluster synthesis onto IscU, an Fe-S scaffold assembly protein, as well as other S acceptor proteins. The protein is Cysteine desulfurase IscS of Vibrio vulnificus (strain CMCP6).